The chain runs to 67 residues: MMFRLTSVSCFLLVIACLNLFQVVLTSRCFPPGIYCTPYLPCCWGICCGTCRNVCHLRFGKRATFQE.

The signal sequence occupies residues 1–26 (MMFRLTSVSCFLLVIACLNLFQVVLT). 4 cysteine pairs are disulfide-bonded: Cys29–Cys43, Cys36–Cys48, Cys42–Cys51, and Cys47–Cys55. Position 59 is a phenylalanine amide (Phe59). A propeptide spanning residues 63–67 (ATFQE) is cleaved from the precursor.

Belongs to the conotoxin I2 superfamily. Expressed by the venom duct.

The protein resides in the secreted. Inhibits the vertebrate voltage-gated potassium channels Kv1.1/KCNA1 and Kv1.3/KCNA3. The chain is Kappa-conotoxin-like Em11.8 from Conus emaciatus (False virgin cone).